A 404-amino-acid polypeptide reads, in one-letter code: Rhomboid-related protein 3 (404 aa).

EF-hand domains follow at residues 34–69 (APED…HSSK) and 70–105 (LDPH…KRSN). Transmembrane regions (helical) follow at residues 164–184 (WFMI…GVLL), 227–247 (LGLN…VHGA), 250–270 (IGLV…VADM), 274–294 (VVGS…NIVM), 305–324 (LLRM…RAVW), 338–358 (PSFV…VVVL), and 371–391 (WWIF…WNIF). Residue S278 is the Nucleophile of the active site. The active site involves H343.

The protein belongs to the peptidase S54 family.

Its subcellular location is the membrane. The enzyme catalyses Cleaves type-1 transmembrane domains using a catalytic dyad composed of serine and histidine that are contributed by different transmembrane domains.. May be involved in regulated intramembrane proteolysis and the subsequent release of functional polypeptides from their membrane anchors. This Mus musculus (Mouse) protein is Rhomboid-related protein 3 (Rhbdl3).